A 248-amino-acid chain; its full sequence is Probable transcriptional regulatory protein Fphi_1565 (248 aa).

This sequence belongs to the TACO1 family.

Its subcellular location is the cytoplasm. The chain is Probable transcriptional regulatory protein Fphi_1565 from Francisella philomiragia subsp. philomiragia (strain ATCC 25017 / CCUG 19701 / FSC 153 / O#319-036).